We begin with the raw amino-acid sequence, 618 residues long: Proline--tRNA ligase (618 aa).

It belongs to the class-II aminoacyl-tRNA synthetase family. ProS type 1 subfamily. Homodimer.

Its subcellular location is the cytoplasm. It carries out the reaction tRNA(Pro) + L-proline + ATP = L-prolyl-tRNA(Pro) + AMP + diphosphate. Its function is as follows. Catalyzes the attachment of proline to tRNA(Pro) in a two-step reaction: proline is first activated by ATP to form Pro-AMP and then transferred to the acceptor end of tRNA(Pro). As ProRS can inadvertently accommodate and process non-cognate amino acids such as alanine and cysteine, to avoid such errors it has two additional distinct editing activities against alanine. One activity is designated as 'pretransfer' editing and involves the tRNA(Pro)-independent hydrolysis of activated Ala-AMP. The other activity is designated 'posttransfer' editing and involves deacylation of mischarged Ala-tRNA(Pro). The misacylated Cys-tRNA(Pro) is not edited by ProRS. The sequence is that of Proline--tRNA ligase from Streptococcus equi subsp. equi (strain 4047).